We begin with the raw amino-acid sequence, 634 residues long: RING finger protein 207 (634 aa).

Residues 25-64 (CPLCHVQYERPCLLDCFHDFCAGCLRGRATDGRLTCPLCQ) form an RING-type zinc finger. The B box-type; atypical zinc finger occupies 93–145 (VEAVRCANCDLECSEQDVETTYFCNTCGQPLCARCRDETHRARMFARHDIVAL). The Zn(2+) site is built by C98, C101, C127, and H132. 2 coiled-coil regions span residues 422–457 (EHCR…KHHS) and 494–518 (EIWE…HDLL). A disordered region spans residues 552–634 (FQAPVDEQSE…DVPTWREHPT (83 aa)).

As to quaternary structure, interacts with the core-glycosylated, but not the fully glycosylated form of KCNH2/HERG. Interacts with DNAJA1 and HSPA8. Interacts (via the C-terminus) with HSPA1A; this interaction additively increases KCNH2 expression.

The protein resides in the cytoplasm. Functionally, plays a role in cardiac repolarization possibly by stabilizing membrane expression of the potassium channel KCNH2/HERG, or by assisting its synthesis, folding or export from the endoplasmic reticulum, in a heat shock protein-dependent manner. The polypeptide is RING finger protein 207 (RNF207) (Homo sapiens (Human)).